The primary structure comprises 317 residues: Ribosomal protein L11 methyltransferase (317 aa).

S-adenosyl-L-methionine contacts are provided by Thr-158, Gly-179, Asp-201, and Asn-244.

This sequence belongs to the methyltransferase superfamily. PrmA family.

Its subcellular location is the cytoplasm. It catalyses the reaction L-lysyl-[protein] + 3 S-adenosyl-L-methionine = N(6),N(6),N(6)-trimethyl-L-lysyl-[protein] + 3 S-adenosyl-L-homocysteine + 3 H(+). In terms of biological role, methylates ribosomal protein L11. The protein is Ribosomal protein L11 methyltransferase of Streptococcus pyogenes serotype M28 (strain MGAS6180).